Reading from the N-terminus, the 301-residue chain is Protease HtpX homolog (301 aa).

A run of 2 helical transmembrane segments spans residues 11–31 (VLLL…IAGA) and 34–54 (NSAF…YSYW). His-138 contributes to the Zn(2+) binding site. Glu-139 is a catalytic residue. His-142 provides a ligand contact to Zn(2+). Helical transmembrane passes span 154 to 174 (AAAV…AAIF) and 188 to 208 (LVGL…QLAI). Glu-213 lines the Zn(2+) pocket.

It belongs to the peptidase M48B family. Requires Zn(2+) as cofactor.

Its subcellular location is the cell membrane. In Kocuria rhizophila (strain ATCC 9341 / DSM 348 / NBRC 103217 / DC2201), this protein is Protease HtpX homolog.